The following is a 61-amino-acid chain: Insect toxin BsIT2 (61 aa).

The region spanning 1 to 61 (DGYIKKSKGC…RWKYETKTCK (61 aa)) is the LCN-type CS-alpha/beta domain. Intrachain disulfides connect Cys-10-Cys-60, Cys-14-Cys-35, Cys-21-Cys-42, and Cys-25-Cys-44.

It belongs to the long (4 C-C) scorpion toxin superfamily. Sodium channel inhibitor family. Beta subfamily. As to expression, expressed by the venom gland.

Its subcellular location is the secreted. Depressant insect beta-toxins cause a transient contraction paralysis followed by a slow flaccid paralysis. They bind voltage-independently at site-4 of sodium channels (Nav) and shift the voltage of activation toward more negative potentials thereby affecting sodium channel activation and promoting spontaneous and repetitive firing. This toxin is active only on insects. The protein is Insect toxin BsIT2 of Hottentotta tamulus sindicus (Scorpion).